The primary structure comprises 181 residues: Oligoribonuclease (181 aa).

One can recognise an Exonuclease domain in the interval L8 to L171. Residue Y129 is part of the active site.

Belongs to the oligoribonuclease family.

Its subcellular location is the cytoplasm. Its function is as follows. 3'-to-5' exoribonuclease specific for small oligoribonucleotides. The polypeptide is Oligoribonuclease (Vibrio campbellii (strain ATCC BAA-1116)).